Reading from the N-terminus, the 535-residue chain is Cytochrome P450 monooxygenase BOA7 (535 aa).

The chain crosses the membrane as a helical span at residues 20 to 37; that stretch reads SIFLILGFFVLAAILIAW. Asn-65, Asn-148, Asn-180, and Asn-420 each carry an N-linked (GlcNAc...) asparagine glycan. Cys-478 provides a ligand contact to heme.

Belongs to the cytochrome P450 family. The cofactor is heme.

The protein localises to the membrane. Its pathway is polyketide biosynthesis. In terms of biological role, cytochrome P450 monooxygenase; part of the gene cluster B that mediates the biosynthesis of botcinic acid and its botcinin derivatives, acetate-derived polyketides that contribute to virulence when combined with the sesquiterpene botrydial. Botcinic acid and its derivatives have been shown to induce chlorosis and necrosis during host plant infection, but also have antifungal activities. Two polyketide synthases, BOA6 and BOA9, are involved in the biosynthesis of botcinins. BOA6 mediates the formation of the per-methylated tetraketide core by condensation of four units of malonyl-CoA with one unit of acetyl-CoA, which would be methylated in activated methylene groups to yield a bicyclic acid intermediate that could then either be converted to botrylactone derivatives or lose the starter acetate unit through a retro-Claisen type C-C bond cleavage to yield botcinin derivatives. The second polyketide synthase, BOA9, is probably required for the biosynthesis of the tetraketide side chain of botcinins. The methyltransferase (MT) domain within BOA6 is probably responsible for the incorporation of four methyl groups. The trans-enoyl reductase BOA5 might take over the enoyl reductase function of BOA6 that misses an ER domain. The monooxygenases BOA2, BOA3 and BOA4 might be involved in further hydroxylations at C4, C5 and C8, whereas BOA7, close to BOA9, could potentially be involved in the hydroxylation at C4 in the side chain of botcinins. The chain is Cytochrome P450 monooxygenase BOA7 from Botryotinia fuckeliana (strain B05.10) (Noble rot fungus).